The sequence spans 484 residues: MSTPPLPDELRRVHMVGIGGAGMSGIARILLDRGAMVSGSDAKESRAVVALRARGAAIRIGHDASSLDLLPGGPTAVVTTHAAIPKTNPELVEARRRAIPIVLRPVVLAKLMAGHTTLMVTGTHGKTTTTSMLIVALQHCGFDPSFAVGGDLGEAGTNAHHGSGECFVAEADESDGSLLEYTPDVAVVTNIEADHLDFFGSAEAYTAVFDAFVERLTPGGALIACVDDPGSAALAERTAALGVRVLRYGSAGGRDLAGALVGWEQQGTGAVAHIQLAGESAPRAMRLSVPGRHMALNALGALLAALQVGADPDTVLDGLAGFEGVRRRFELVGTATGVRVFDDYAHHPTEVAATLAALRAVTDQAGDGRAVVVFQPHLYSRTETFAREFGAALSAADLVFVLDVYGAREQPIAGVSGASIVEHVGVPVTYVPDFSAVAAQVAGAVRPGDVVVTMGAGDVTMLGPEIIAALQARANRTVPGAGAR.

An ATP-binding site is contributed by 122–128 (GTHGKTT).

This sequence belongs to the MurCDEF family.

Its subcellular location is the cytoplasm. It carries out the reaction UDP-N-acetyl-alpha-D-muramate + L-alanine + ATP = UDP-N-acetyl-alpha-D-muramoyl-L-alanine + ADP + phosphate + H(+). The protein operates within cell wall biogenesis; peptidoglycan biosynthesis. Functionally, cell wall formation. This is UDP-N-acetylmuramate--L-alanine ligase from Mycobacterium sp. (strain JLS).